We begin with the raw amino-acid sequence, 196 residues long: Potassium-transporting ATPase KdpC subunit (196 aa).

The chain crosses the membrane as a helical span at residues 17–37 (LLLLVATAGLGLVYPLAVFAV). A disordered region spans residues 73–93 (QPRPSAAGDGYDPTASGASNL).

The protein belongs to the KdpC family. The system is composed of three essential subunits: KdpA, KdpB and KdpC.

It is found in the cell membrane. In terms of biological role, part of the high-affinity ATP-driven potassium transport (or Kdp) system, which catalyzes the hydrolysis of ATP coupled with the electrogenic transport of potassium into the cytoplasm. This subunit acts as a catalytic chaperone that increases the ATP-binding affinity of the ATP-hydrolyzing subunit KdpB by the formation of a transient KdpB/KdpC/ATP ternary complex. The sequence is that of Potassium-transporting ATPase KdpC subunit from Kineococcus radiotolerans (strain ATCC BAA-149 / DSM 14245 / SRS30216).